The following is a 426-amino-acid chain: Tyrosine--tRNA ligase (426 aa).

Tyrosine 36 serves as a coordination point for L-tyrosine. The 'HIGH' region motif lies at 41–50 (PTAPSLHVGH). The L-tyrosine site is built by tyrosine 174 and glutamine 178. A 'KMSKS' region motif is present at residues 234 to 238 (KLGKS). Residue lysine 237 coordinates ATP. The S4 RNA-binding domain maps to 359 to 416 (DGIVDLLVASGLSPSRGAARRTIDEGGVLVNNIRIQSEEWTPRTSDFLHGRWLVLRRG).

Belongs to the class-I aminoacyl-tRNA synthetase family. TyrS type 1 subfamily. In terms of assembly, homodimer.

Its subcellular location is the cytoplasm. The enzyme catalyses tRNA(Tyr) + L-tyrosine + ATP = L-tyrosyl-tRNA(Tyr) + AMP + diphosphate + H(+). Functionally, catalyzes the attachment of tyrosine to tRNA(Tyr) in a two-step reaction: tyrosine is first activated by ATP to form Tyr-AMP and then transferred to the acceptor end of tRNA(Tyr). In Mycobacterium leprae (strain TN), this protein is Tyrosine--tRNA ligase.